We begin with the raw amino-acid sequence, 421 residues long: Testin (421 aa).

Residues 92–199 (MILTNPVAAR…GDVKLPCELD (108 aa)) enclose the PET domain. Positions 134–164 (KQPVAGSEGAQYRKKQLAKQLPAHDQDPSKC) are disordered. The span at 155 to 164 (PAHDQDPSKC) shows a compositional bias: basic and acidic residues. 3 consecutive LIM zinc-binding domains span residues 234 to 297 (YSCY…CDSE), 299 to 359 (PRCA…NHAV), and 362 to 421 (QGCH…KMMS).

It belongs to the prickle / espinas / testin family. As to quaternary structure, interacts via LIM domain 1 with ZYX. Interacts (via LIM domain 3) with ENAH and VASP. Interacts with ALKBH4, talin, actin, alpha-actinin, GRIP1 and PXN. Interacts (via LIM domain 2) with ACTL7A (via N-terminus). Heterodimer with ACTL7A; the heterodimer interacts with ENAH to form a heterotrimer.

It is found in the cytoplasm. Its subcellular location is the cell junction. The protein resides in the focal adhesion. Functionally, scaffold protein that may play a role in cell adhesion, cell spreading and in the reorganization of the actin cytoskeleton. Plays a role in the regulation of cell proliferation. May act as a tumor suppressor. This Eulemur macaco macaco (Black lemur) protein is Testin (TES).